We begin with the raw amino-acid sequence, 2083 residues long: Nonribosomal peptide synthetase sidD (2083 aa).

The tract at residues T251–R650 is adenylation 1. The 77-residue stretch at R764–D840 folds into the Carrier 1 domain. S801 carries the post-translational modification O-(pantetheine 4'-phosphoryl)serine. A condensation 1 region spans residues E876–I1146. Residues L1336–H1421 form an adenylation 2 region. Positions N1557 to E1633 constitute a Carrier 2 domain. S1594 is modified (O-(pantetheine 4'-phosphoryl)serine). A condensation 2 region spans residues D1674–F1946.

The protein belongs to the NRP synthetase family.

The protein operates within siderophore biosynthesis. In terms of biological role, nonribosomal peptide synthetase; part of the siderophore biosynthetic pathway. Aspergillus fumigatus produces four types of siderophores, low-molecular-mass iron chelators, including excreted fusarinine C (FsC) and triacetylfusarinine C (TAFC) for iron uptake; and intacellular ferricrocin (FC) for hyphal and hydroxyferricrocin (HFC) for conidial iron distribution and storage. TAFC consists of three N(2)-acetyl-N(5)-anhydromevalonyl-N(5)-hydroxyornithine residues cyclically linked by ester bonds; FC is a cyclic hexapeptide with the structure Gly-Ser-Gly-(N(5)-acetyl-N(5)-hydroxyornithine)x3. The biosynthesis of all four siderophores depends on the hydroxylation of ornithine, catalyzed by the monooxygenase sidA. Subsequently, the pathways for biosynthesis of extra- and intracellular siderophores split. For biosynthesis of extracellular siderophores, the transacylase sidF transfers anhydromevalonyl to N(5)-hydroxyornithine. The required anhydromevalonyl-CoA moiety is derived from mevalonate by CoA ligation and dehydration catalyzed by sidI and sidH respectively. The acetylation of N(5)-hydroxyornithine for FC biosynthesis involves the constitutively expressed sidL. FC is hydroxylated to HFC by an as yet uncharacterized enzyme during conidiation. Assembly of fusarinine C (FsC) and FC is catalyzed by two different nonribosomal peptide synthetases (NRPS), sidD and sidC respectively. Subsequently, sidG catalyzes N2-acetylation of FsC for forming TAFC. Both extra- and intracellular siderophores are crucial for growth during iron limitation and virulence. This is Nonribosomal peptide synthetase sidD from Aspergillus fumigatus (strain ATCC MYA-4609 / CBS 101355 / FGSC A1100 / Af293) (Neosartorya fumigata).